We begin with the raw amino-acid sequence, 700 residues long: Methionine--tRNA ligase (700 aa).

The 'HIGH' region signature appears at 16–26 (PYANGAFHVGH). Zn(2+) is bound by residues cysteine 148, cysteine 151, cysteine 161, and cysteine 164. Residues 337–341 (KMSKS) carry the 'KMSKS' region motif. Lysine 340 provides a ligand contact to ATP. The 107-residue stretch at 594-700 (DFAKIDLRIA…PGAEPGMRVG (107 aa)) folds into the tRNA-binding domain.

The protein belongs to the class-I aminoacyl-tRNA synthetase family. MetG type 1 subfamily. Homodimer. Requires Zn(2+) as cofactor.

The protein resides in the cytoplasm. It carries out the reaction tRNA(Met) + L-methionine + ATP = L-methionyl-tRNA(Met) + AMP + diphosphate. Functionally, is required not only for elongation of protein synthesis but also for the initiation of all mRNA translation through initiator tRNA(fMet) aminoacylation. The protein is Methionine--tRNA ligase of Janthinobacterium sp. (strain Marseille) (Minibacterium massiliensis).